A 552-amino-acid polypeptide reads, in one-letter code: HTH-type transcriptional regulator SgrR (552 aa).

The 116-residue stretch at 1-116 (MPSGRLQQQF…LISHLGRSFR (116 aa)) folds into the HTH marR-type domain. The segment at residues 26–49 (LNELADLLNCSRRHMRTLLNTMQA) is a DNA-binding region (H-T-H motif). The solute-binding stretch occupies residues 163–493 (ELEADIAHHW…RDWQDDAAQW (331 aa)).

In terms of biological role, activates the small RNA gene sgrS under glucose-phosphate stress conditions as well as yfdZ. Represses its own transcription under both stress and non-stress conditions. Might act as a sensor of the intracellular accumulation of phosphoglucose by binding these molecules in its C-terminal solute-binding domain. The sequence is that of HTH-type transcriptional regulator SgrR from Salmonella typhi.